The sequence spans 220 residues: Uracil-DNA glycosylase (220 aa).

Asp61 functions as the Proton acceptor in the catalytic mechanism.

It belongs to the uracil-DNA glycosylase (UDG) superfamily. UNG family.

The protein localises to the cytoplasm. It carries out the reaction Hydrolyzes single-stranded DNA or mismatched double-stranded DNA and polynucleotides, releasing free uracil.. Functionally, excises uracil residues from the DNA which can arise as a result of misincorporation of dUMP residues by DNA polymerase or due to deamination of cytosine. This is Uracil-DNA glycosylase from Pseudoalteromonas translucida (strain TAC 125).